An 89-amino-acid chain; its full sequence is Small ribosomal subunit protein uS15 (89 aa).

Belongs to the universal ribosomal protein uS15 family. In terms of assembly, part of the 30S ribosomal subunit. Forms a bridge to the 50S subunit in the 70S ribosome, contacting the 23S rRNA.

In terms of biological role, one of the primary rRNA binding proteins, it binds directly to 16S rRNA where it helps nucleate assembly of the platform of the 30S subunit by binding and bridging several RNA helices of the 16S rRNA. Its function is as follows. Forms an intersubunit bridge (bridge B4) with the 23S rRNA of the 50S subunit in the ribosome. This chain is Small ribosomal subunit protein uS15, found in Paramagnetospirillum magneticum (strain ATCC 700264 / AMB-1) (Magnetospirillum magneticum).